A 195-amino-acid polypeptide reads, in one-letter code: HTH-type transcriptional regulator TtmR (195 aa).

The HTH marR-type domain maps to 47-177 (DSQLCFAVYA…LLDNLASMRD (131 aa)). The H-T-H motif DNA-binding region spans 93–116 (VKEIGSRLFLDSGTLTPLLKRLEA).

It is found in the cytoplasm. Formaldehyde-responsive transcription factor that modulates resistance to stress induced by formaldehyde. Impacts the expression of a number of genes encoding transcription factors and/or involved in stress response, including efgA, and which probably collectively trigger a formaldehyde-specific physiological response. Required for optimal transition to methylotrophy. Not involved in a general stress response. In Methylorubrum extorquens (strain PA1) (Methylobacterium extorquens), this protein is HTH-type transcriptional regulator TtmR.